Reading from the N-terminus, the 41-residue chain is Large ribosomal subunit protein bL32c (41 aa).

Belongs to the bacterial ribosomal protein bL32 family.

Its subcellular location is the plastid. The sequence is that of Large ribosomal subunit protein bL32c (rpl32) from Helicosporidium sp. subsp. Simulium jonesii (Green alga).